Here is a 625-residue protein sequence, read N- to C-terminus: Chaperone protein HtpG (625 aa).

An a; substrate-binding region spans residues 1–341; sequence MGKRKFKAES…SEDLSLNISR (341 aa). Residues 342–551 form a b region; it reads EMLQHDRQLK…DGEISLEMEK (210 aa). A c region spans residues 552-625; the sequence is IINAMPDDQQ…FTNDICKVMV (74 aa).

The protein belongs to the heat shock protein 90 family. As to quaternary structure, homodimer.

It localises to the cytoplasm. Its function is as follows. Molecular chaperone. Has ATPase activity. This chain is Chaperone protein HtpG, found in Oceanobacillus iheyensis (strain DSM 14371 / CIP 107618 / JCM 11309 / KCTC 3954 / HTE831).